The following is a 676-amino-acid chain: Lutropin-choriogonadotropic hormone receptor (676 aa).

An N-terminal signal peptide occupies residues 1–29 (MKQPLLALQLLKLLLLLLLPLPPLPRALR). Topologically, residues 30–340 (EARCCPEPCN…EDIMGYDFLR (311 aa)) are extracellular. A glycan (N-linked (GlcNAc...) asparagine) is linked at Asn103. LRR repeat units follow at residues 126-151 (LPRLKYLSICNTGIRKFPDVTKIFSS), 153-175 (TNFILEICDNLHITTIPGNAFQG), 176-200 (MNNESITLKLYGNGFEEVQSHAFNG), 201-224 (TTVISLVLKENVHLERIHNGAFRG), and 225-248 (ATGPSILDISSTKLQALPSHGLES). 2 N-linked (GlcNAc...) asparagine glycosylation sites follow: Asn178 and Asn199. Tyr308 is subject to Sulfotyrosine. The helical transmembrane segment at 341–362 (VLIWLINILAIMGNMTVLFVLL) threads the bilayer. At 363 to 372 (TSRYKLTVPR) the chain is on the cytoplasmic side. The chain crosses the membrane as a helical span at residues 373–393 (FLMCNLSFADFCMGLYLLLIA). Over 394–416 (SVDSQTKGQYYNHAIDWQTGSGC) the chain is Extracellular. Cys416 and Cys491 are disulfide-bonded. The helical transmembrane segment at 417–439 (NTAGFFTVFASELSVYTLTVITL) threads the bilayer. Residues 440–459 (ERWHTITYAIHLDQKLRLRH) are Cytoplasmic-facing. Residues 460-482 (AILIMLGGWLFSSLIAMLPLVGV) form a helical membrane-spanning segment. At 483 to 502 (SNYMKVSICFPMDVETTLSQ) the chain is on the extracellular side. A helical membrane pass occupies residues 503–526 (IYILTILILNVVAFIIICACYIKI). At 527–547 (YFAVRNPELMATNKDTKIAKK) the chain is on the cytoplasmic side. Residues 548-571 (MAILIFTDFTCMAPISFFAISAAF) form a helical membrane-spanning segment. The Extracellular portion of the chain corresponds to 572-582 (KMPLITVTNSK). The chain crosses the membrane as a helical span at residues 583–604 (VLLVLFYPINSCANPFLYAIFT). Topologically, residues 605 to 676 (KTFRRDFFLL…LLDKTCYKEY (72 aa)) are cytoplasmic. Residues Cys620 and Cys621 are each lipidated (S-palmitoyl cysteine).

Belongs to the G-protein coupled receptor 1 family. FSH/LSH/TSH subfamily. In terms of processing, sulfated.

It localises to the cell membrane. Its function is as follows. Receptor for lutropin-choriogonadotropic hormone. The activity of this receptor is mediated by G proteins which activate adenylate cyclase. In Callithrix jacchus (White-tufted-ear marmoset), this protein is Lutropin-choriogonadotropic hormone receptor (LHCGR).